Consider the following 139-residue polypeptide: UPF0251 protein Csac_0224 (139 aa).

It belongs to the UPF0251 family.

In Caldicellulosiruptor saccharolyticus (strain ATCC 43494 / DSM 8903 / Tp8T 6331), this protein is UPF0251 protein Csac_0224.